The chain runs to 606 residues: MDDQNKNLILATALSFLVILVWFLLFPPEEPVTDPNAPTQITQSGETADVALTPPAAVTEAAPGAAPQTAATPTENAPRVQIDTPALEGSISLLGGRIDDLSLRNYNETLEPDSPIVRLLSPVDAPGAYYALYGWAPAGTLSFDDVPGANTLWTVESGDTLTVDTPVVLRWENGNGLIFRRTLAVDDDFMFTVTQSVENTTETDKRMQPYGIIARHGEPDTINFFVLHEGVVAMADGSLIESDYDDMLDYDFVEREGARAEVEQIEQNGWIGFTDKNWMTTLIPTPGQPFTSVAKYVGNADIYQTETRLPTQTVPGGQTVTVETRLFAGAKEWEAIRGYERELGIEGFIDSIDWGWFYFLTKPIFFVLHELNLLIGNMGVAIIVLTLLIKALLLPLAWKSYVSMARMKELQPEMEKLKEKAGDDRQKLQVAMMELYKKEKVNPAAGCLPILLQIPIFFSLYKVIFVTIELRHAPFFGPFQDLSAPDPTSIMNLFGLLPFASPEPGSILALIFIGILPLLLGISMWLQQKLNPAPTDPTQAMIFAWLPWVFMFMLGTFASGLIVYWIANNVITFAQQYFIMRRHGYKPDLFGNIVASFKKKKPSEDK.

Residues 8 to 28 (LILATALSFLVILVWFLLFPP) traverse the membrane as a helical segment. Residues 59–78 (TEAAPGAAPQTAATPTENAP) show a composition bias toward low complexity. The disordered stretch occupies residues 59–79 (TEAAPGAAPQTAATPTENAPR). 4 helical membrane-spanning segments follow: residues 378 to 398 (MGVA…PLAW), 448 to 468 (LPIL…FVTI), 506 to 526 (SILA…SMWL), and 542 to 562 (IFAW…SGLI).

This sequence belongs to the OXA1/ALB3/YidC family. Type 1 subfamily. As to quaternary structure, interacts with the Sec translocase complex via SecD. Specifically interacts with transmembrane segments of nascent integral membrane proteins during membrane integration.

It is found in the cell inner membrane. Functionally, required for the insertion and/or proper folding and/or complex formation of integral membrane proteins into the membrane. Involved in integration of membrane proteins that insert both dependently and independently of the Sec translocase complex, as well as at least some lipoproteins. Aids folding of multispanning membrane proteins. This is Membrane protein insertase YidC from Dinoroseobacter shibae (strain DSM 16493 / NCIMB 14021 / DFL 12).